The primary structure comprises 424 residues: Tyrosine--tRNA ligase (424 aa).

Tyr-37 contacts L-tyrosine. Residues 42–51 (PTADSLHLGH) carry the 'HIGH' region motif. Position 144 is an N6-acetyllysine (Lys-144). 2 residues coordinate L-tyrosine: Tyr-175 and Gln-179. The 'KMSKS' region signature appears at 235–239 (KFGKT). Lys-238 is a binding site for ATP. An S4 RNA-binding domain is found at 357-414 (ADLMQALVDSELQPSRGQARKTIASNAITINGEKQSDPEYFFKEEDRLFGRFTLLRRG).

This sequence belongs to the class-I aminoacyl-tRNA synthetase family. TyrS type 1 subfamily. In terms of assembly, homodimer.

The protein localises to the cytoplasm. It carries out the reaction tRNA(Tyr) + L-tyrosine + ATP = L-tyrosyl-tRNA(Tyr) + AMP + diphosphate + H(+). Functionally, catalyzes the attachment of tyrosine to tRNA(Tyr) in a two-step reaction: tyrosine is first activated by ATP to form Tyr-AMP and then transferred to the acceptor end of tRNA(Tyr). In Escherichia coli O127:H6 (strain E2348/69 / EPEC), this protein is Tyrosine--tRNA ligase.